The sequence spans 380 residues: MPLDPSPTLNSLGFAKPPAETRVVVAMSGGVDSSVVAAMLAEEGYDVVGVTLQLYDHGAALAKKGACCAGLDIHDARRVSEKMGFPHYVLDYENIFKDAVIDEFAESYLGGATPVPCIRCNERVKFKDLLETAKDLDADCMATGHYIQRKSGPYGAELHSAADANRDQSYFLFSTTPEQLAFLRFPLGHLPSKEDTRALAEKYGLSVANKPDSQDICFVPDGDYASVIRKLRPEAAAPGDIVDTDGRVLARHDGVVNYTIGQRRGLGIGGLATPLYVIKLDAEARQVVVGPKSMLSTRTVPVREINWLGDEPFQSRDAWHLAVKVRSTRPPTDAIIRPISDTEATVELTSPEEGISPGQACVFYDTDSSRIYGGGWIHKG.

ATP contacts are provided by residues 26 to 33 (AMSGGVDS) and L52. C120 (nucleophile) is an active-site residue. A disulfide bridge links C120 with C217. G144 provides a ligand contact to ATP. The interval 166-168 (RDQ) is interaction with tRNA. Catalysis depends on C217, which acts as the Cysteine persulfide intermediate.

The protein belongs to the MnmA/TRMU family.

It localises to the cytoplasm. It catalyses the reaction S-sulfanyl-L-cysteinyl-[protein] + uridine(34) in tRNA + AH2 + ATP = 2-thiouridine(34) in tRNA + L-cysteinyl-[protein] + A + AMP + diphosphate + H(+). Catalyzes the 2-thiolation of uridine at the wobble position (U34) of tRNA, leading to the formation of s(2)U34. In Roseobacter denitrificans (strain ATCC 33942 / OCh 114) (Erythrobacter sp. (strain OCh 114)), this protein is tRNA-specific 2-thiouridylase MnmA.